We begin with the raw amino-acid sequence, 151 residues long: UPF0178 protein Desal_2673 (151 aa).

It belongs to the UPF0178 family.

In Maridesulfovibrio salexigens (strain ATCC 14822 / DSM 2638 / NCIMB 8403 / VKM B-1763) (Desulfovibrio salexigens), this protein is UPF0178 protein Desal_2673.